The primary structure comprises 619 residues: Leucine aminopeptidase 2 (619 aa).

A peptide-binding positions include 141 to 143 (QCQ) and 273 to 278 (PYGGME). His-302 contacts Zn(2+). The active-site Proton acceptor is the Glu-303. His-306 and Glu-325 together coordinate Zn(2+). Residue Tyr-390 is the Proton donor of the active site.

Belongs to the peptidase M1 family. Requires Zn(2+) as cofactor.

Its subcellular location is the cytoplasm. The protein resides in the nucleus. It carries out the reaction an epoxide + H2O = an ethanediol. Its function is as follows. Aminopeptidase that preferentially cleaves di- and tripeptides. Also has low epoxide hydrolase activity (in vitro). Can hydrolyze the epoxide leukotriene LTA(4) but it forms preferentially 5,6-dihydroxy-7,9,11,14-eicosatetraenoic acid rather than the cytokine leukotriene B(4) as the product compared to the homologous mammalian enzyme (in vitro). The polypeptide is Leucine aminopeptidase 2 (Coccidioides immitis (strain RS) (Valley fever fungus)).